Reading from the N-terminus, the 238-residue chain is Purine nucleoside phosphorylase DeoD-type (238 aa).

H4 contacts a purine D-ribonucleoside. Residues G20, R24, R43, and 87–90 contribute to the phosphate site; that span reads RVGS. Residues 179-181 and 203-204 contribute to the a purine D-ribonucleoside site; these read EME and SD. The active-site Proton donor is the D204.

This sequence belongs to the PNP/UDP phosphorylase family. Homohexamer; trimer of homodimers.

It catalyses the reaction a purine D-ribonucleoside + phosphate = a purine nucleobase + alpha-D-ribose 1-phosphate. The catalysed reaction is a purine 2'-deoxy-D-ribonucleoside + phosphate = a purine nucleobase + 2-deoxy-alpha-D-ribose 1-phosphate. Catalyzes the reversible phosphorolytic breakdown of the N-glycosidic bond in the beta-(deoxy)ribonucleoside molecules, with the formation of the corresponding free purine bases and pentose-1-phosphate. The polypeptide is Purine nucleoside phosphorylase DeoD-type (Haemophilus influenzae (strain PittGG)).